We begin with the raw amino-acid sequence, 134 residues long: NADH-quinone oxidoreductase subunit A (134 aa).

The next 3 membrane-spanning stretches (helical) occupy residues 14 to 34 (FFMF…LSWI), 66 to 86 (FYLI…LYAW), and 96 to 116 (IGFS…FYLV).

Belongs to the complex I subunit 3 family. In terms of assembly, NDH-1 is composed of 13 different subunits. Subunits NuoA, H, J, K, L, M, N constitute the membrane sector of the complex.

The protein localises to the cell membrane. The enzyme catalyses a quinone + NADH + 5 H(+)(in) = a quinol + NAD(+) + 4 H(+)(out). Functionally, NDH-1 shuttles electrons from NADH, via FMN and iron-sulfur (Fe-S) centers, to quinones in the respiratory chain. The immediate electron acceptor for the enzyme in this species is believed to be ubiquinone. Couples the redox reaction to proton translocation (for every two electrons transferred, four hydrogen ions are translocated across the cytoplasmic membrane), and thus conserves the redox energy in a proton gradient. The chain is NADH-quinone oxidoreductase subunit A from Buchnera aphidicola subsp. Acyrthosiphon pisum (strain APS) (Acyrthosiphon pisum symbiotic bacterium).